A 647-amino-acid chain; its full sequence is Auxin efflux carrier component 2 (647 aa).

Residues 1–7 (MITGKDM) are Extracellular-facing. The chain crosses the membrane as a helical span at residues 8-28 (YDVLAAMVPLYVAMILAYGSV). The Cytoplasmic portion of the chain corresponds to 29-38 (RWWGIFTPDQ). Residues 39 to 59 (CSGINRFVAVFAVPLLSFHFI) traverse the membrane as a helical segment. Val51 serves as a coordination point for (indol-3-yl)acetate. The Extracellular segment spans residues 60 to 68 (SSNDPYAMN). The helical transmembrane segment at 69–89 (YHFLAADSLQKVVILAALFLW) threads the bilayer. Over 90-100 (QAFSRRGSLEW) the chain is Cytoplasmic. A helical membrane pass occupies residues 101–121 (MITLFSLSTLPNTLVMGIPLL). Residues Asn112 and Leu114 each coordinate (indol-3-yl)acetate. Residues 122-131 (RAMYGDFSGN) lie on the Extracellular side of the membrane. A helical membrane pass occupies residues 132-152 (LMVQIVVLQSIIWYTLMLFLF). Tyr145 serves as a coordination point for (indol-3-yl)acetate. Topologically, residues 153–507 (EFRGAKLLIS…LIRNPNTYSS (355 aa)) are cytoplasmic. Phosphoserine is present on residues Ser237, Ser258, and Ser310. Residues 339–380 (SVPSYPPPNPMFTGSTSGASGVKKKESGGGGSGGGVGVGGQN) are disordered. A Phosphothreonine modification is found at Thr354. Positions 366–378 (GGGGSGGGVGVGG) are enriched in gly residues. Ser393 carries the post-translational modification Phosphoserine. 2 disordered regions span residues 397-420 (EANA…KVSI) and 440-481 (PGRK…QQMP). Residues 508-528 (LFGLAWSLVSFKWNIKMPTIM) traverse the membrane as a helical segment. At 529–531 (SGS) the chain is on the extracellular side. A helical transmembrane segment spans residues 532-552 (ISILSDAGLGMAMFSLGLFMA). Topologically, residues 553–568 (LQPKIIACGKSVAGFA) are cytoplasmic. A helical membrane pass occupies residues 569–589 (MAVRFLTGPAVIAATSIAIGI). Residues 590–592 (RGD) lie on the Extracellular side of the membrane. A helical membrane pass occupies residues 593-613 (LLHIAIVQAALPQGIVPFVFA). 2 residues coordinate (indol-3-yl)acetate: Ile607 and Val608. Residues 614 to 626 (KEYNVHPDILSTA) lie on the Cytoplasmic side of the membrane. A helical transmembrane segment spans residues 627–647 (VIFGMLVALPVTVLYYVLLGL).

The protein belongs to the auxin efflux carrier (TC 2.A.69.1) family. Homodimer. Interacts with FYPP1 and FYPP3. Component of a complex made of PINs (e.g. PIN1 and PIN2), MAB4/MELs (e.g. NPY1/MAB4 and NPY5/MEL1) and AGC kinases (e.g. D6PK and PID) at the plasma membrane. Binds directly to NPY1/MAB4, NPY5/MEL1 and PID. As to expression, root-specific. Localized to the cortex, epidermis and lateral root cap, predominantly at the upper side of cells.

The protein resides in the cell membrane. Acts as a component of the auxin efflux carrier. Seems to be involved in the root-specific auxin transport, and mediates the root gravitropism. Its particular localization suggests a role in the translocation of auxin towards the elongation zone. Recrutes NPY proteins (e.g. NPY1/MAB4 and NPY5/MEL1) to the plasma membrane in a polar basal localization in root epidermis; this activity is optimized by AGC kinases-mediated (e.g. D6PK and PID) phosphorylation that limits their lateral diffusion-based escape. The chain is Auxin efflux carrier component 2 from Arabidopsis thaliana (Mouse-ear cress).